The primary structure comprises 181 residues: Cytochrome b6-f complex iron-sulfur subunit (181 aa).

Positions 1–35 are disordered; the sequence is MAQTGNFKSPARMSSLGQGAAPASAGAVTGGKPRE. 2 consecutive transmembrane segments (helical) span residues 53-73 and 114-134; these read VGGV…RYIV and GGSL…VHWD. One can recognise a Rieske domain in the interval 85-178; sequence LAVGPASDVP…VKIEDGKIVV (94 aa). Residues Cys124, His126, Cys142, and His145 each contribute to the [2Fe-2S] cluster site. A disulfide bridge connects residues Cys129 and Cys144.

Belongs to the Rieske iron-sulfur protein family. It depends on [2Fe-2S] cluster as a cofactor.

The protein resides in the cell inner membrane. It catalyses the reaction 2 oxidized [plastocyanin] + a plastoquinol + 2 H(+)(in) = 2 reduced [plastocyanin] + a plastoquinone + 4 H(+)(out). In terms of biological role, component of the green S-bacteria bc-complex which consists of the Rieske protein and cytochrome b subunit and which appears to lack a cytochrome c1-equivalent. This complex has a comparatively low redox potential. The polypeptide is Cytochrome b6-f complex iron-sulfur subunit (petC) (Chlorobaculum tepidum (strain ATCC 49652 / DSM 12025 / NBRC 103806 / TLS) (Chlorobium tepidum)).